Here is a 199-residue protein sequence, read N- to C-terminus: dITP/XTP pyrophosphatase (199 aa).

Residue 8-13 (SGNAGK) coordinates substrate. Catalysis depends on aspartate 69, which acts as the Proton acceptor. Mg(2+) is bound at residue aspartate 69. Substrate contacts are provided by residues serine 70, 154 to 157 (FGYN), lysine 177, and 182 to 183 (HR).

Belongs to the HAM1 NTPase family. As to quaternary structure, homodimer. Requires Mg(2+) as cofactor.

The catalysed reaction is XTP + H2O = XMP + diphosphate + H(+). It carries out the reaction dITP + H2O = dIMP + diphosphate + H(+). The enzyme catalyses ITP + H2O = IMP + diphosphate + H(+). Pyrophosphatase that catalyzes the hydrolysis of nucleoside triphosphates to their monophosphate derivatives, with a high preference for the non-canonical purine nucleotides XTP (xanthosine triphosphate), dITP (deoxyinosine triphosphate) and ITP. Seems to function as a house-cleaning enzyme that removes non-canonical purine nucleotides from the nucleotide pool, thus preventing their incorporation into DNA/RNA and avoiding chromosomal lesions. This Xanthomonas oryzae pv. oryzae (strain KACC10331 / KXO85) protein is dITP/XTP pyrophosphatase.